Here is a 381-residue protein sequence, read N- to C-terminus: Pentraxin-related protein PTX3 (381 aa).

Residues 1–17 form the signal peptide; it reads MHLLAILFCALWSAVLA. 2 coiled-coil regions span residues 74–101 and 143–167; these read LQAT…SLAR and EEAG…HAVQ. Cystine bridges form between C179-C357 and C210-C271. In terms of domain architecture, Pentraxin (PTX) spans 179 to 381; sequence CETAILFPMR…QPHGGAQYVS (203 aa). Residue N220 is glycosylated (N-linked (GlcNAc...) asparagine).

Homooctamer; disulfide-linked. Binds to C1q. As to quaternary structure, (Microbial infection) Interacts with SARS coronavirus-2/SARS-CoV-2 Nucleoprotein and Spike protein homotrimer. In terms of processing, glycosylated.

The protein localises to the secreted. In terms of biological role, plays a role in the regulation of innate resistance to pathogens, inflammatory reactions, possibly clearance of self-components and female fertility. This is Pentraxin-related protein PTX3 from Homo sapiens (Human).